The following is a 963-amino-acid chain: MLQQVNGHSLGSDAEGRASLKGDLREFLGGEIPLHQLDDLTKVNPVTLETVLRCLQARYTEDIFYTNAGCTLVALNPFKHVPQLYAPELMQEYHAAPQPQKLKPHIFTVGEQTYRNVKSLIEPVNQSIVVSGESGAGKTWTSRCLMKFYAVVAASPTSCENHKIAERIEQRILNSNPVMEAFGNACTLRNSNSSRFGKFIQLQLNRAQQMTGAAVQTYLLEKTRVACQASSERNFHIFYQICKGATKDERLQWHLPEGTAFSWLPNPESSLEEDCFEVTREAMLHLGIDTPTQNNIFKVLAGLLHLGNVHFVDSEDEALPCQVMDDTKVSVRTSALLLQLPEKMLLESMQIRTIKAGKQQQVFQKPCSRAECDTRRDCLAKLIYARLFDWLVSVINSSICADSKSWTAFIGLLDVYGFESFPNNSLEQLCINYANEKLQQHFVAHYLRAQQEEYEVEGLEWSFVNYQDNQTCLDLLEGSPISICSLINEECRLNRPSSAAQLQTRIESTLAGRPCLGHNKLSREPSFVVVHFAGPVRYHTAGLVEKNKDPVPPELTELLQQSQDPLLTMLFPANPEEKTQEELSGQSRAPALTVVSKFKASLEQLLQVLHNTTPHYIRCIKPNSQSQPQTFLQEEVLNQLEACGLVETIHISAAGFPIRVSHQNFIERYKLLRRLGPRMSSGLGGLEPAEGSSEQPLCAKEATLQPLLQDILHALPALIQTAATPSDPAKNTQIPLYCGRTKIFMTDSMLELLECGRAQMLEQCARCIQCGWRRHRLQKQEKQRRAAVLIQAAFRSWLTRKHIRRLHIAATVIKHAWHKWRIRMACLASKELDGMEEKPMPQAPGTLRSSMSPAHTRFLGAIIHLWPLGLVLANSADGVRGFQRKLVAHACLRLPSDRPSNKVQTPQQDQAGITSIRALPQGSIKFHCRKSPLQYADICPDPSASCVTGFNQILLESHRPVQV.

One can recognise a Myosin motor domain in the interval His-35–Ala-758. Gly-132–Thr-139 provides a ligand contact to ATP. An actin-binding region spans residues Leu-602–Ser-624. IQ domains are found at residues Glu-762 to Lys-782 and Gln-783 to Val-812. Residues Ser-829 to Val-963 are myMOMA region.

It belongs to the TRAFAC class myosin-kinesin ATPase superfamily. Myosin family. As to quaternary structure, myosin is a hexamer of 2 heavy chains and 4 light chains: interacts with myosin light chains MYL9 and MYL12B.

The protein localises to the mitochondrion outer membrane. Its subcellular location is the cytoplasm. It localises to the cytoskeleton. Its function is as follows. Actin-based motor molecule with ATPase activity that localizes to the mitochondrion outer membrane. Motor protein that moves towards the plus-end of actin filaments. Required for mitochondrial inheritance during mitosis. May be involved in mitochondrial transport or positioning. The polypeptide is Unconventional myosin-XIX (Mus musculus (Mouse)).